A 3948-amino-acid polypeptide reads, in one-letter code: Hybrid PKS-NRPS synthetase fsa1 (3948 aa).

The region spanning 4–438 (SEPIAVIGSA…GTNAHAIIEA (435 aa)) is the Ketosynthase family 3 (KS3) domain. Active-site for beta-ketoacyl synthase activity residues include C177, H316, and H358. Residues 543 to 846 (IFTGQGTQWP…LDTIEAISEG (304 aa)) form a malonyl-CoA:ACP transacylase (MAT) domain region. The interval 931–1066 (HPLLGRRCHD…AQIKASLGTP (136 aa)) is N-terminal hotdog fold. Positions 931–1233 (HPLLGRRCHD…MELVPFSPAT (303 aa)) are dehydratase (DH) domain. Positions 931 to 1235 (HPLLGRRCHD…LVPFSPATPA (305 aa)) constitute a PKS/mFAS DH domain. The active-site Proton acceptor; for dehydratase activity is the H964. The segment at 1081 to 1235 (LRPVSVDRFY…LVPFSPATPA (155 aa)) is C-terminal hotdog fold. Residue D1141 is the Proton donor; for dehydratase activity of the active site. The tract at residues 1381–1578 (YEQGFGLNLV…TTPPVHKILP (198 aa)) is methyltransferase (MT) domain. Residues 2105–2277 (TFLLIGLTGE…VAASSIDISS (173 aa)) are ketoreductase (KR) domain. One can recognise a Carrier 1 domain in the interval 2389–2464 (AIIKESFIVR…DLVDESLDLL (76 aa)). Position 2424 is an O-(pantetheine 4'-phosphoryl)serine (S2424). Positions 2475-2555 (EAGNAHPAKP…TDNLTPPRTF (81 aa)) are disordered. Composition is skewed to polar residues over residues 2487 to 2505 (VIPQ…QGTS) and 2513 to 2528 (GSDS…LTSW). The segment covering 2529–2541 (DRQDLSPPDKSDD) has biased composition (basic and acidic residues). A compositionally biased stretch (polar residues) spans 2542-2551 (APNSTDNLTP). Residues 2547-2976 (DNLTPPRTFP…TQVLLRSYLS (430 aa)) are condensation (C) domain. Residues 3000–3402 (LKVAVDAGKA…PDTFFGTSGT (403 aa)) are adenylation (A) (KR) domain. The region spanning 3540-3617 (KSLTASEKRL…AMASVLEDCG (78 aa)) is the Carrier 2 domain. An O-(pantetheine 4'-phosphoryl)serine modification is found at S3577. Positions 3653–3870 (LTGSSGYLGR…MPVNEIVEAI (218 aa)) are reductase (RED) domain.

This sequence in the C-terminal section; belongs to the NRP synthetase family.

The enzyme catalyses L-serine + 7 malonyl-CoA + acetyl-CoA + 2 S-adenosyl-L-methionine + ATP + 8 NADPH + 11 H(+) = (5S)-3-[(2E,6R,8E,10E,12E)-2,6-dimethyltetradeca-2,8,10,12-tetraenoyl]-5-(hydroxymethyl)pyrrolidine-2,4-dione + AMP + 2 S-adenosyl-L-homocysteine + 7 CO2 + diphosphate + 8 NADP(+) + 8 CoA + 6 H2O. It participates in mycotoxin biosynthesis. Its function is as follows. Hybrid PKS-NRPS synthetase; part of the gene cluster that mediates the biosynthesis of HIV-1 integrase inhibitor equisetin and of fusarisetin A, both trans-fused decalin-containing tetramic acids showing also antimicrobial activity. The PKS module of fsa1 together with the enoylreductase fsa3 catalyze the formation of the polyketide unit which is then conjugated to L-serine by the condensation domain of the fsa1 NRPS module. Activity of the Dieckmann cyclase domain (RED) results in release of the Dieckmann product intermediate. Diels-Alderase fsa2 is involved in endo-selective Diels-Alder cycloaddition to form the decalin ring, leading to the production of N-desmethylequisetin also called trichosetin. Subsequent N-methylation is carried out by fsa4 to give equisetin. The enzymatic gene responsible for the conversion of equisetin to fusarisetin A has not been identified yet and is probably located outside of the fsa cluster. The chain is Hybrid PKS-NRPS synthetase fsa1 from Fusarium sp. (strain FN080326).